The primary structure comprises 149 residues: Secreted RxLR effector protein 47 (149 aa).

Residues 1–22 (MICLLPLIAVMLFVFATHTVLA) form the signal peptide. Residues 57 to 79 (RFLRQETTFEEKPSVNDVHAEER) carry the RxLR-dEER motif.

It belongs to the RxLR effector family.

The protein localises to the secreted. The protein resides in the host membrane. Its function is as follows. Secreted effector that completely suppresses the host cell death induced by cell death-inducing proteins. The sequence is that of Secreted RxLR effector protein 47 from Plasmopara viticola (Downy mildew of grapevine).